The following is a 320-amino-acid chain: Aspartate carbamoyltransferase catalytic subunit (320 aa).

Positions 58 and 59 each coordinate carbamoyl phosphate. An L-aspartate-binding site is contributed by lysine 86. 3 residues coordinate carbamoyl phosphate: arginine 108, histidine 136, and glutamine 139. L-aspartate contacts are provided by arginine 169 and arginine 223. Carbamoyl phosphate-binding residues include glycine 264 and proline 265.

It belongs to the aspartate/ornithine carbamoyltransferase superfamily. ATCase family. Heterododecamer (2C3:3R2) of six catalytic PyrB chains organized as two trimers (C3), and six regulatory PyrI chains organized as three dimers (R2).

It carries out the reaction carbamoyl phosphate + L-aspartate = N-carbamoyl-L-aspartate + phosphate + H(+). The protein operates within pyrimidine metabolism; UMP biosynthesis via de novo pathway; (S)-dihydroorotate from bicarbonate: step 2/3. Its function is as follows. Catalyzes the condensation of carbamoyl phosphate and aspartate to form carbamoyl aspartate and inorganic phosphate, the committed step in the de novo pyrimidine nucleotide biosynthesis pathway. The protein is Aspartate carbamoyltransferase catalytic subunit of Cereibacter sphaeroides (strain ATCC 17029 / ATH 2.4.9) (Rhodobacter sphaeroides).